The following is a 673-amino-acid chain: UvrABC system protein B (673 aa).

Residues 29–188 enclose the Helicase ATP-binding domain; it reads EGLNDGLAHQ…LAELQYTRND (160 aa). 42–49 provides a ligand contact to ATP; that stretch reads GVTGSGKT. The short motif at 95 to 118 is the Beta-hairpin element; it reads YYDYYQPEAYVPSSDTFIEKDASI. Residues 434–600 form the Helicase C-terminal domain; the sequence is QVDDVLSEIH…ALNKKVGELL (167 aa). Residues 607-632 form a disordered region; that stretch reads KPKRGKQAVKVEEKSANTYKPKSRKE. The region spanning 634–669 is the UVR domain; it reads EKELKQLEQQMRDFAKDLEFEKAAAVRDKIGQLKAV.

This sequence belongs to the UvrB family. In terms of assembly, forms a heterotetramer with UvrA during the search for lesions. Interacts with UvrC in an incision complex.

Its subcellular location is the cytoplasm. Its function is as follows. The UvrABC repair system catalyzes the recognition and processing of DNA lesions. A damage recognition complex composed of 2 UvrA and 2 UvrB subunits scans DNA for abnormalities. Upon binding of the UvrA(2)B(2) complex to a putative damaged site, the DNA wraps around one UvrB monomer. DNA wrap is dependent on ATP binding by UvrB and probably causes local melting of the DNA helix, facilitating insertion of UvrB beta-hairpin between the DNA strands. Then UvrB probes one DNA strand for the presence of a lesion. If a lesion is found the UvrA subunits dissociate and the UvrB-DNA preincision complex is formed. This complex is subsequently bound by UvrC and the second UvrB is released. If no lesion is found, the DNA wraps around the other UvrB subunit that will check the other stand for damage. This chain is UvrABC system protein B, found in Actinobacillus pleuropneumoniae serotype 5b (strain L20).